We begin with the raw amino-acid sequence, 160 residues long: Transcription antitermination protein NusB (160 aa).

This sequence belongs to the NusB family.

Functionally, involved in transcription antitermination. Required for transcription of ribosomal RNA (rRNA) genes. Binds specifically to the boxA antiterminator sequence of the ribosomal RNA (rrn) operons. This is Transcription antitermination protein NusB from Rhizobium johnstonii (strain DSM 114642 / LMG 32736 / 3841) (Rhizobium leguminosarum bv. viciae).